Reading from the N-terminus, the 426-residue chain is Glutamyl-tRNA reductase (426 aa).

Substrate-binding positions include 51–54, serine 110, 115–117, and glutamine 121; these read TCNR and EAQ. Cysteine 52 acts as the Nucleophile in catalysis. An NADP(+)-binding site is contributed by 190–195; sequence GAGEMA.

It belongs to the glutamyl-tRNA reductase family. Homodimer.

It carries out the reaction (S)-4-amino-5-oxopentanoate + tRNA(Glu) + NADP(+) = L-glutamyl-tRNA(Glu) + NADPH + H(+). Its pathway is porphyrin-containing compound metabolism; protoporphyrin-IX biosynthesis; 5-aminolevulinate from L-glutamyl-tRNA(Glu): step 1/2. Functionally, catalyzes the NADPH-dependent reduction of glutamyl-tRNA(Glu) to glutamate 1-semialdehyde (GSA). This is Glutamyl-tRNA reductase from Desulfotalea psychrophila (strain LSv54 / DSM 12343).